Consider the following 297-residue polypeptide: Protoheme IX farnesyltransferase (297 aa).

9 consecutive transmembrane segments (helical) span residues 23–43 (VTQL…PGMP), 49–69 (VFGT…NCLI), 93–113 (IQVL…LYHL), 117–137 (LTMW…TVIL), 144–164 (NIVI…AAVA), 171–191 (AWVL…ALAL), 215–235 (RLHI…PYAI), 238–258 (SGAL…WYAW), and 275–295 (FSIL…WVGL).

The protein belongs to the UbiA prenyltransferase family. Protoheme IX farnesyltransferase subfamily.

The protein localises to the cell inner membrane. It carries out the reaction heme b + (2E,6E)-farnesyl diphosphate + H2O = Fe(II)-heme o + diphosphate. Its pathway is porphyrin-containing compound metabolism; heme O biosynthesis; heme O from protoheme: step 1/1. In terms of biological role, converts heme B (protoheme IX) to heme O by substitution of the vinyl group on carbon 2 of heme B porphyrin ring with a hydroxyethyl farnesyl side group. This chain is Protoheme IX farnesyltransferase, found in Bordetella pertussis (strain Tohama I / ATCC BAA-589 / NCTC 13251).